The following is an 876-amino-acid chain: Eukaryotic translation initiation factor 3 subunit C (876 aa).

2 disordered regions span residues 1 to 25 (MSRFFATGTDSESESSSEDEPVVRA) and 154 to 233 (SXFR…IREQ). Positions 11-20 (SESESSSEDE) are enriched in acidic residues. 2 stretches are compositionally biased toward basic and acidic residues: residues 154 to 172 (SXFREDPDLPDDNERKDSS) and 182 to 192 (KPIKEKPKPEP). The segment covering 206 to 219 (SMDWASSSSDSSFS) has biased composition (low complexity). Positions 632–808 (FHMHINLELL…ECAILHRSEP (177 aa)) constitute a PCI domain. A disordered region spans residues 839-876 (FFQRGGAQRGEGRQRERPREGWNRRTRNRRRDDERADD). Positions 848–861 (GEGRQRERPREGWN) are enriched in basic and acidic residues.

The protein belongs to the eIF-3 subunit C family. Component of the eukaryotic translation initiation factor 3 (eIF-3) complex.

The protein localises to the cytoplasm. In terms of biological role, component of the eukaryotic translation initiation factor 3 (eIF-3) complex, which is involved in protein synthesis of a specialized repertoire of mRNAs and, together with other initiation factors, stimulates binding of mRNA and methionyl-tRNAi to the 40S ribosome. The eIF-3 complex specifically targets and initiates translation of a subset of mRNAs involved in cell proliferation. This Bombyx mori (Silk moth) protein is Eukaryotic translation initiation factor 3 subunit C.